A 1082-amino-acid polypeptide reads, in one-letter code: Carbamoyl phosphate synthase large chain (1082 aa).

Residues 1 to 401 (MPKDKALKKV…ALLKAVRSLE (401 aa)) are carboxyphosphate synthetic domain. Positions 129, 169, 175, 176, 208, 210, 215, 241, 242, 243, 284, and 298 each coordinate ATP. The ATP-grasp 1 domain maps to 133-327 (KNMCLEIGEP…IAKVATKVAV (195 aa)). Residues Gln284, Glu298, and Asn300 each contribute to the Mg(2+) site. Positions 284, 298, and 300 each coordinate Mn(2+). Positions 402–561 (TGVTGMNLPE…YSTYEDEDEA (160 aa)) are oligomerization domain. The segment at 562–944 (EPQAVRKVVV…ALYKACLSAG (383 aa)) is carbamoyl phosphate synthetic domain. Residues 686–876 (DQLVAELGIP…MVNLATRICL (191 aa)) form the ATP-grasp 2 domain. ATP contacts are provided by Arg722, Lys761, Leu763, Glu767, Gly792, Ile793, His794, Ser795, Gln835, and Glu847. Mg(2+) is bound by residues Gln835, Glu847, and Asn849. Mn(2+) contacts are provided by Gln835, Glu847, and Asn849. Residues 945 to 1082 (YTLPSSGKAV…PLIPLQEYVS (138 aa)) enclose the MGS-like domain. The allosteric domain stretch occupies residues 945-1082 (YTLPSSGKAV…PLIPLQEYVS (138 aa)).

Belongs to the CarB family. As to quaternary structure, composed of two chains; the small (or glutamine) chain promotes the hydrolysis of glutamine to ammonia, which is used by the large (or ammonia) chain to synthesize carbamoyl phosphate. Tetramer of heterodimers (alpha,beta)4. The cofactor is Mg(2+). It depends on Mn(2+) as a cofactor.

It carries out the reaction hydrogencarbonate + L-glutamine + 2 ATP + H2O = carbamoyl phosphate + L-glutamate + 2 ADP + phosphate + 2 H(+). The enzyme catalyses hydrogencarbonate + NH4(+) + 2 ATP = carbamoyl phosphate + 2 ADP + phosphate + 2 H(+). The protein operates within amino-acid biosynthesis; L-arginine biosynthesis; carbamoyl phosphate from bicarbonate: step 1/1. It participates in pyrimidine metabolism; UMP biosynthesis via de novo pathway; (S)-dihydroorotate from bicarbonate: step 1/3. Large subunit of the glutamine-dependent carbamoyl phosphate synthetase (CPSase). CPSase catalyzes the formation of carbamoyl phosphate from the ammonia moiety of glutamine, carbonate, and phosphate donated by ATP, constituting the first step of 2 biosynthetic pathways, one leading to arginine and/or urea and the other to pyrimidine nucleotides. The large subunit (synthetase) binds the substrates ammonia (free or transferred from glutamine from the small subunit), hydrogencarbonate and ATP and carries out an ATP-coupled ligase reaction, activating hydrogencarbonate by forming carboxy phosphate which reacts with ammonia to form carbamoyl phosphate. This Desulforudis audaxviator (strain MP104C) protein is Carbamoyl phosphate synthase large chain.